Consider the following 465-residue polypeptide: 23S rRNA (uracil(1939)-C(5))-methyltransferase RlmD (465 aa).

Residues 1 to 20 (MSEAVPLSTPGASHAGAATD) form a disordered region. Residues 12-80 (ASHAGAATDR…PTYEQAQVVD (69 aa)) enclose the TRAM domain. Positions 93, 99, 102, and 181 each coordinate [4Fe-4S] cluster. Gln-289, Phe-318, Asn-323, Glu-339, Asn-367, and Asp-388 together coordinate S-adenosyl-L-methionine. Cys-421 serves as the catalytic Nucleophile.

Belongs to the class I-like SAM-binding methyltransferase superfamily. RNA M5U methyltransferase family. RlmD subfamily.

It carries out the reaction uridine(1939) in 23S rRNA + S-adenosyl-L-methionine = 5-methyluridine(1939) in 23S rRNA + S-adenosyl-L-homocysteine + H(+). Catalyzes the formation of 5-methyl-uridine at position 1939 (m5U1939) in 23S rRNA. The polypeptide is 23S rRNA (uracil(1939)-C(5))-methyltransferase RlmD (Burkholderia thailandensis (strain ATCC 700388 / DSM 13276 / CCUG 48851 / CIP 106301 / E264)).